The chain runs to 595 residues: Guanylate-binding protein 3 (595 aa).

The interval 1–309 is GTPase domain (Globular); sequence MAPEIHMTGP…NAISRGDLPC (309 aa). The 242-residue stretch at 35–276 folds into the GB1/RHD3-type G domain; it reads TQPVVVVAIV…FCSYIFSNSK (242 aa). GTP is bound by residues 45–52, 67–69, and 97–101; these read GLYRTGKS, LGS, and DTEGL. The stretch at 482-595 forms a coiled coil; it reads EKEKEIEVEC…KRYMSHKLKI (114 aa).

Belongs to the TRAFAC class dynamin-like GTPase superfamily. GB1/RHD3 GTPase family. GB1 subfamily. Heterodimer with other family members, including GBP1, GBP2 and GBP5. Dimerization regulates subcellular location.

It is found in the cytoplasm. The protein resides in the perinuclear region. Its subcellular location is the golgi apparatus membrane. It catalyses the reaction GTP + H2O = GDP + phosphate + H(+). Interferon (IFN)-inducible GTPase that plays important roles in innate immunity against a diverse range of bacterial, viral and protozoan pathogens. Hydrolyzes GTP very efficiently; GDP rather than GMP is the major reaction product. Following infection, recruited to the pathogen-containing vacuoles or vacuole-escaped bacteria and acts as a positive regulator of inflammasome assembly by promoting the release of inflammasome ligands from bacteria. Acts by promoting lysis of pathogen-containing vacuoles, releasing pathogens into the cytosol. Following pathogen release in the cytosol, promotes recruitment of proteins that mediate bacterial cytolysis: this liberates ligands that are detected by inflammasomes, such as lipopolysaccharide (LPS) that activates the non-canonical CASP4/CASP11 inflammasome or double-stranded DNA (dsDNA) that activates the AIM2 inflammasome. Exhibits antiviral activity against influenza virus. Functionally, shows the most prominent antiviral activity in epithelial cells. The polypeptide is Guanylate-binding protein 3 (GBP3) (Homo sapiens (Human)).